The following is a 588-amino-acid chain: Ribonuclease Y (588 aa).

The chain crosses the membrane as a helical span at residues valine 7–valine 27. Positions valine 278–alanine 359 constitute a KH domain. An HD domain is found at valine 404 to glycine 497.

Belongs to the RNase Y family.

The protein resides in the cell membrane. Endoribonuclease that initiates mRNA decay. This is Ribonuclease Y from Salinispora tropica (strain ATCC BAA-916 / DSM 44818 / JCM 13857 / NBRC 105044 / CNB-440).